A 443-amino-acid polypeptide reads, in one-letter code: Serine/threonine-protein kinase ISR1 (443 aa).

The region spanning 135–415 is the Protein kinase domain; it reads LPSNKLVGQG…LRNDLFQDWK (281 aa). ATP is bound by residues 141–149 and Lys169; that span reads VGQGSYSYV. Residue Asp280 is the Proton acceptor of the active site.

This sequence belongs to the protein kinase superfamily. Ser/Thr protein kinase family.

It catalyses the reaction L-seryl-[protein] + ATP = O-phospho-L-seryl-[protein] + ADP + H(+). The enzyme catalyses L-threonyl-[protein] + ATP = O-phospho-L-threonyl-[protein] + ADP + H(+). Its function is as follows. Probable serine/threonine protein kinase which may function redundantly with MPK1-independent branch of the PCK1 pathway that is presumed to be required for the tolerance to high temperatures and staurosporine. The polypeptide is Serine/threonine-protein kinase ISR1 (ISR1) (Saccharomyces cerevisiae (strain ATCC 204508 / S288c) (Baker's yeast)).